The sequence spans 312 residues: MRLVFAGTPEPALASLRRLIESPSHDVIAVLTRPDAASGRRGKPQPSPVAREAAERGIPVLRPSRPNSAEFVAELSDLAPECCAVVAYGALLGGPLLAVPPHGWVNLHFSLLPAWRGAAPVQAAIAAGDTITGATTFQIEPSLDSGPIYGVVTEVIQPTDTAGDLLKRLAVSGAALLSTTLDGIADQRLTPRPQPADGVSVAPKITVANARVRWDLPAAVVERRIRAVTPNPGAWTLIGDLRVKLGPVHLDAAHRPSKPLPPGGIHVERTSVWIGTGSEPVRLGQIQPPGKKLMNAADWARGARLDLAARAT.

The segment at Pro-34 to Ala-54 is disordered. Ser-110–Pro-113 contacts (6S)-5,6,7,8-tetrahydrofolate.

This sequence belongs to the Fmt family.

It catalyses the reaction L-methionyl-tRNA(fMet) + (6R)-10-formyltetrahydrofolate = N-formyl-L-methionyl-tRNA(fMet) + (6S)-5,6,7,8-tetrahydrofolate + H(+). Functionally, attaches a formyl group to the free amino group of methionyl-tRNA(fMet). The formyl group appears to play a dual role in the initiator identity of N-formylmethionyl-tRNA by promoting its recognition by IF2 and preventing the misappropriation of this tRNA by the elongation apparatus. In Mycobacterium tuberculosis (strain ATCC 25177 / H37Ra), this protein is Methionyl-tRNA formyltransferase.